A 430-amino-acid polypeptide reads, in one-letter code: 3-phosphoshikimate 1-carboxyvinyltransferase (430 aa).

The 3-phosphoshikimate site is built by lysine 21, serine 22, and arginine 26. Residue lysine 21 coordinates phosphoenolpyruvate. Phosphoenolpyruvate contacts are provided by glycine 94 and arginine 122. 3-phosphoshikimate-binding residues include serine 168, glutamine 170, aspartate 315, and lysine 342. Glutamine 170 is a phosphoenolpyruvate binding site. Catalysis depends on aspartate 315, which acts as the Proton acceptor. Phosphoenolpyruvate contacts are provided by arginine 346 and arginine 389.

Belongs to the EPSP synthase family. Monomer.

Its subcellular location is the cytoplasm. It carries out the reaction 3-phosphoshikimate + phosphoenolpyruvate = 5-O-(1-carboxyvinyl)-3-phosphoshikimate + phosphate. It participates in metabolic intermediate biosynthesis; chorismate biosynthesis; chorismate from D-erythrose 4-phosphate and phosphoenolpyruvate: step 6/7. Its function is as follows. Catalyzes the transfer of the enolpyruvyl moiety of phosphoenolpyruvate (PEP) to the 5-hydroxyl of shikimate-3-phosphate (S3P) to produce enolpyruvyl shikimate-3-phosphate and inorganic phosphate. The chain is 3-phosphoshikimate 1-carboxyvinyltransferase from Salinibacter ruber (strain DSM 13855 / M31).